Consider the following 165-residue polypeptide: Mitochondrial fission process protein 1 (165 aa).

3 helical membrane-spanning segments follow: residues 35-55, 76-96, and 130-150; these read ALVP…YVTA, VCVC…SVAV, and IGLS…DLLL.

This sequence belongs to the MTFP1 family.

The protein resides in the mitochondrion inner membrane. Its function is as follows. Involved in the mitochondrial division probably by regulating membrane fission. Loss-of-function leads to apoptosis. The chain is Mitochondrial fission process protein 1 (mtfp1) from Danio rerio (Zebrafish).